Reading from the N-terminus, the 84-residue chain is Small ribosomal subunit protein bS18 (84 aa).

It belongs to the bacterial ribosomal protein bS18 family. In terms of assembly, part of the 30S ribosomal subunit. Forms a tight heterodimer with protein bS6.

Binds as a heterodimer with protein bS6 to the central domain of the 16S rRNA, where it helps stabilize the platform of the 30S subunit. In Helicobacter hepaticus (strain ATCC 51449 / 3B1), this protein is Small ribosomal subunit protein bS18.